A 247-amino-acid chain; its full sequence is Probable transcriptional regulatory protein YPO2055/y2255/YP_1898 (247 aa).

It belongs to the TACO1 family.

The protein resides in the cytoplasm. The protein is Probable transcriptional regulatory protein YPO2055/y2255/YP_1898 of Yersinia pestis.